The sequence spans 509 residues: Steroid 17-alpha-hydroxylase/17,20 lyase (509 aa).

Residue Asn202 participates in substrate binding. Cys442 is a binding site for heme.

Belongs to the cytochrome P450 family. It depends on heme as a cofactor.

The protein resides in the endoplasmic reticulum membrane. It is found in the microsome membrane. It catalyses the reaction a C21-steroid + reduced [NADPH--hemoprotein reductase] + O2 = a 17alpha-hydroxy-C21-steroid + oxidized [NADPH--hemoprotein reductase] + H2O + H(+). The catalysed reaction is progesterone + reduced [NADPH--hemoprotein reductase] + O2 = 17alpha-hydroxyprogesterone + oxidized [NADPH--hemoprotein reductase] + H2O + H(+). The enzyme catalyses pregnenolone + reduced [NADPH--hemoprotein reductase] + O2 = 17alpha-hydroxypregnenolone + oxidized [NADPH--hemoprotein reductase] + H2O + H(+). It carries out the reaction 17alpha-hydroxyprogesterone + reduced [NADPH--hemoprotein reductase] + O2 = androst-4-ene-3,17-dione + acetate + oxidized [NADPH--hemoprotein reductase] + H2O + 2 H(+). It catalyses the reaction 17alpha-hydroxyprogesterone + reduced [NADPH--hemoprotein reductase] + O2 = 16alpha,17alpha-dihydroxyprogesterone + oxidized [NADPH--hemoprotein reductase] + H2O + H(+). The catalysed reaction is 16alpha,17alpha-dihydroxyprogesterone + reduced [NADPH--hemoprotein reductase] + O2 = 6beta,16alpha,17alpha-trihydroxyprogesterone + oxidized [NADPH--hemoprotein reductase] + H2O + H(+). The enzyme catalyses 17alpha-hydroxypregnenolone + reduced [NADPH--hemoprotein reductase] + O2 = 3beta-hydroxyandrost-5-en-17-one + acetate + oxidized [NADPH--hemoprotein reductase] + H2O + 2 H(+). It carries out the reaction 16alpha,17alpha-dihydroxypregnenolone + reduced [NADPH--hemoprotein reductase] + O2 = 3beta,16alpha-dihydroxy-androst-5-en-17-one + acetate + oxidized [NADPH--hemoprotein reductase] + H2O + 2 H(+). It catalyses the reaction 3beta-hydroxyandrost-5-en-17-one + reduced [NADPH--hemoprotein reductase] + O2 = 3beta,16alpha-dihydroxy-androst-5-en-17-one + oxidized [NADPH--hemoprotein reductase] + H2O + H(+). The catalysed reaction is androst-4-ene-3,17-dione + reduced [NADPH--hemoprotein reductase] + O2 = 16alpha-hydroxyandrost-4-ene-3,17-dione + oxidized [NADPH--hemoprotein reductase] + H2O + H(+). Its pathway is steroid hormone biosynthesis. The protein operates within steroid biosynthesis; glucocorticoid biosynthesis. With respect to regulation, regulated predominantly by intracellular cAMP levels. The 17,20-lyase activity is stimulated by cytochrome b5, which acts as an allosteric effector increasing the Vmax of the lyase activity. Functionally, a cytochrome P450 monooxygenase involved in corticoid and androgen biosynthesis. Catalyzes 17-alpha hydroxylation of C21 steroids, which is common for both pathways. A second oxidative step, required only for androgen synthesis, involves an acyl-carbon cleavage. The 17-alpha hydroxy intermediates, as part of adrenal glucocorticoids biosynthesis pathway, are precursors of cortisol. Hydroxylates steroid hormones, pregnenolone and progesterone to form 17-alpha hydroxy metabolites, followed by the cleavage of the C17-C20 bond to form C19 steroids, dehydroepiandrosterone (DHEA) and androstenedione. Has 16-alpha hydroxylase activity. Catalyzes 16-alpha hydroxylation of 17-alpha hydroxy pregnenolone, followed by the cleavage of the C17-C20 bond to form 16-alpha-hydroxy DHEA. Also 16-alpha hydroxylates androgens, relevant for estriol synthesis. Mechanistically, uses molecular oxygen inserting one oxygen atom into a substrate, and reducing the second into a water molecule, with two electrons provided by NADPH via cytochrome P450 reductase (CPR; NADPH-ferrihemoprotein reductase). The sequence is that of Steroid 17-alpha-hydroxylase/17,20 lyase (CYP17A1) from Ovis aries (Sheep).